A 404-amino-acid chain; its full sequence is Acetate kinase (404 aa).

Mg(2+) is bound at residue Asn-7. Position 14 (Lys-14) interacts with ATP. Arg-95 lines the substrate pocket. Asp-152 acts as the Proton donor/acceptor in catalysis. Residues His-212–Gly-216, Asp-286–Arg-288, and Gly-334–Asn-338 each bind ATP. Glu-388 is a Mg(2+) binding site.

Belongs to the acetokinase family. Homodimer. Mg(2+) serves as cofactor. The cofactor is Mn(2+).

The protein resides in the cytoplasm. It catalyses the reaction acetate + ATP = acetyl phosphate + ADP. The protein operates within metabolic intermediate biosynthesis; acetyl-CoA biosynthesis; acetyl-CoA from acetate: step 1/2. Its function is as follows. Catalyzes the formation of acetyl phosphate from acetate and ATP. Can also catalyze the reverse reaction. The polypeptide is Acetate kinase (Lawsonia intracellularis (strain PHE/MN1-00)).